The following is a 366-amino-acid chain: tRNA-specific 2-thiouridylase MnmA (366 aa).

ATP is bound by residues 6–13 and L32; that span reads AMSGGVDS. The Nucleophile role is filled by C101. A disulfide bond links C101 and C198. G125 serves as a coordination point for ATP. An interaction with tRNA region spans residues 148 to 150; the sequence is KDQ. C198 (cysteine persulfide intermediate) is an active-site residue.

Belongs to the MnmA/TRMU family.

It localises to the cytoplasm. It carries out the reaction S-sulfanyl-L-cysteinyl-[protein] + uridine(34) in tRNA + AH2 + ATP = 2-thiouridine(34) in tRNA + L-cysteinyl-[protein] + A + AMP + diphosphate + H(+). Catalyzes the 2-thiolation of uridine at the wobble position (U34) of tRNA, leading to the formation of s(2)U34. The polypeptide is tRNA-specific 2-thiouridylase MnmA (Nocardioides sp. (strain ATCC BAA-499 / JS614)).